Here is a 113-residue protein sequence, read N- to C-terminus: Ribonuclease P protein component (113 aa).

Belongs to the RnpA family. Consists of a catalytic RNA component (M1 or rnpB) and a protein subunit.

It carries out the reaction Endonucleolytic cleavage of RNA, removing 5'-extranucleotides from tRNA precursor.. RNaseP catalyzes the removal of the 5'-leader sequence from pre-tRNA to produce the mature 5'-terminus. It can also cleave other RNA substrates such as 4.5S RNA. The protein component plays an auxiliary but essential role in vivo by binding to the 5'-leader sequence and broadening the substrate specificity of the ribozyme. The chain is Ribonuclease P protein component from Geotalea uraniireducens (strain Rf4) (Geobacter uraniireducens).